The sequence spans 162 residues: Caveolin-2 (162 aa).

Topologically, residues 1–86 (MGLETEKADV…FEVSKYVIYK (86 aa)) are cytoplasmic. Tyrosine 19 is subject to Phosphotyrosine; by SRC. 3 positions are modified to phosphoserine: serine 20, serine 23, and serine 36. Residues 87–107 (FLTLLLAMPMAFAAGVLFATL) constitute an intramembrane region (helical). The Cytoplasmic portion of the chain corresponds to 108 to 162 (SCLHIWIIMPFVKTCLMVLPSVQTIWKSVTDAVIAPLCSSVGRSFSSVSLQVSHD).

The protein belongs to the caveolin family. Monomer or homodimer. Interacts with CAV1; the interaction forms a stable heterooligomeric complex that is required for targeting to lipid rafts and for caveolae formation. Tyrosine phosphorylated forms do not form heterooligomers with the Tyr-19-phosphorylated form existing as a monomer or dimer. Interacts (tyrosine phosphorylated form) with the SH2 domain-containing proteins, RASA1, NCK1 and SRC. Interacts (tyrosine phosphorylated form) with INSR. Interacts (Tyr-19 phosphorylated form) with MAPK1 (phosphorylated form); the interaction, promoted by insulin, leads to nuclear location and MAPK1 activation. Interacts with STAT3; the interaction is increased on insulin-induced tyrosine phosphorylation leading to STAT activation. Phosphorylated on serine and tyrosine residues. CAV1 promotes phosphorylation on Ser-23 which then targets the complex to the plasma membrane, lipid rafts and caveolae. Phosphorylation on Ser-36 appears to modulate mitosis in endothelial cells. Phosphorylation on Tyr-19 is required for insulin-induced phosphorylation of MAPK1 and DNA binding of STAT3. Tyrosine phosphorylation is induced by both EGF and insulin.

Its subcellular location is the nucleus. The protein resides in the cytoplasm. The protein localises to the golgi apparatus membrane. It is found in the cell membrane. It localises to the membrane. Its subcellular location is the caveola. In terms of biological role, may act as a scaffolding protein within caveolar membranes. Interacts directly with G-protein alpha subunits and can functionally regulate their activity. Acts as an accessory protein in conjunction with CAV1 in targeting to lipid rafts and driving caveolae formation. The Ser-36 phosphorylated form has a role in modulating mitosis in endothelial cells. Positive regulator of cellular mitogenesis of the MAPK signaling pathway. Required for the insulin-stimulated nuclear translocation and activation of MAPK1 and STAT3, and the subsequent regulation of cell cycle progression. This Canis lupus familiaris (Dog) protein is Caveolin-2 (CAV2).